The following is a 591-amino-acid chain: Transcription factor COE1 (591 aa).

N-acetylmethionine is present on Met-1. The span at 1-14 (MFGIQESIQRSGSS) shows a compositional bias: polar residues. A disordered region spans residues 1-21 (MFGIQESIQRSGSSMKEEPLG). Lys-16 participates in a covalent cross-link: Glycyl lysine isopeptide (Lys-Gly) (interchain with G-Cter in SUMO1); alternate. Lys-16 participates in a covalent cross-link: Glycyl lysine isopeptide (Lys-Gly) (interchain with G-Cter in SUMO2); alternate. Positions 63–66 (RKSN) are interaction with DNA. A C5-type zinc finger spans residues 151-170 (CRVLLTHEIMCSRCCDKKSC). 2 interaction with DNA regions span residues 197–204 (NCLKNAGN) and 236–239 (NNSK). The IPT/TIG domain maps to 262 to 345 (PCIKAISPSE…KGTPGRFIYT (84 aa)). The disordered stretch occupies residues 457 to 480 (GFTRNSSSVSPHGYVPSTTPQQTN).

This sequence belongs to the COE family. In terms of assembly, homodimer. Interacts with ZNF423 and ZNF521, leading to prevent EBF1 to bind DNA and activate target genes. Interacts with CCR4-NOT component CNOT3. (Microbial infection) Interacts with Epstein-barr virus protein EBNA2.

The protein resides in the nucleus. In terms of biological role, key pioneer transcription factor of B-cell specification and commitment. Recognizes variations of the palindromic sequence 5'-ATTCCCNNGGGAATT-3'. Operates in a transcription factor network to activate B-cell-specific genes and repress genes associated with alternative cell fates. For instance, positively regulates many B-cell specific genes including BCR or CD40 while repressing genes that direct cells into alternative lineages, including GATA3 and TCF7 for the T-cell lineage. In addition to its role during lymphopoiesis, controls the thermogenic gene program in adipocytes during development and in response to environmental cold. Its function is as follows. (Microbial infection) Acts as a chromatin anchor for Epstein-Barr virus EBNA2 to mediate the assembly of EBNA2 chromatin complexes in B-cells. In addition, binds to the viral LMP1 proximal promoter and promotes its expression during latency. In Homo sapiens (Human), this protein is Transcription factor COE1 (EBF1).